Reading from the N-terminus, the 323-residue chain is Acetyl-coenzyme A carboxylase carboxyl transferase subunit alpha (323 aa).

The 255-residue stretch at 39 to 293 (RLSKKSQQLT…RRALADSLRQ (255 aa)) folds into the CoA carboxyltransferase C-terminal domain.

The protein belongs to the AccA family. In terms of assembly, acetyl-CoA carboxylase is a heterohexamer composed of biotin carboxyl carrier protein (AccB), biotin carboxylase (AccC) and two subunits each of ACCase subunit alpha (AccA) and ACCase subunit beta (AccD).

Its subcellular location is the cytoplasm. It carries out the reaction N(6)-carboxybiotinyl-L-lysyl-[protein] + acetyl-CoA = N(6)-biotinyl-L-lysyl-[protein] + malonyl-CoA. Its pathway is lipid metabolism; malonyl-CoA biosynthesis; malonyl-CoA from acetyl-CoA: step 1/1. Component of the acetyl coenzyme A carboxylase (ACC) complex. First, biotin carboxylase catalyzes the carboxylation of biotin on its carrier protein (BCCP) and then the CO(2) group is transferred by the carboxyltransferase to acetyl-CoA to form malonyl-CoA. The sequence is that of Acetyl-coenzyme A carboxylase carboxyl transferase subunit alpha from Paraburkholderia phymatum (strain DSM 17167 / CIP 108236 / LMG 21445 / STM815) (Burkholderia phymatum).